We begin with the raw amino-acid sequence, 343 residues long: Ribosomal RNA small subunit methyltransferase C (343 aa).

This sequence belongs to the methyltransferase superfamily. RsmC family. In terms of assembly, monomer.

The protein resides in the cytoplasm. The catalysed reaction is guanosine(1207) in 16S rRNA + S-adenosyl-L-methionine = N(2)-methylguanosine(1207) in 16S rRNA + S-adenosyl-L-homocysteine + H(+). In terms of biological role, specifically methylates the guanine in position 1207 of 16S rRNA in the 30S particle. The protein is Ribosomal RNA small subunit methyltransferase C of Escherichia coli (strain 55989 / EAEC).